A 429-amino-acid polypeptide reads, in one-letter code: MKKLNTQSPDFQAGLKALLAFETAQNPETERIVADICADVQKRGDAALIEYTNKFDQTNAKSIDDLILTQADLNAAFERIPNDVQTALQTAARRVESYHQRQKMESWSYTDEDGTLLGQQITPLDRVGIYVPGGKAAYPSSVIMNAMPAHVAGVKEIIMVVPTPKGERNDIVLAAAYVAGVTKVFTVGGAQAIAALAYGTETIPQVDKITGPGNAFVAAAKRRVFGVVGIDMVAGPSEILVIADGTTPADWVAMDLFSQAEHDEIAQAILIGTSQAYLDEVEAAMDRLIETMPRRDIIEASLGNRGAMILVKDLNEACEISNYISPEHLELSVENPQEWAKKIRHAGAIFMGRYTGESLGDYCAGPNHVLPTSRTARFSSPLGTYDFQKRSSLIQVSEQGAQKLGETASVLAHGESLTAHARAAEFRMK.

Tyrosine 130, glutamine 191, and asparagine 214 together coordinate NAD(+). Substrate-binding residues include serine 237, glutamine 259, and histidine 262. The Zn(2+) site is built by glutamine 259 and histidine 262. Residues glutamate 327 and histidine 328 each act as proton acceptor in the active site. The substrate site is built by histidine 328, aspartate 361, glutamate 415, and histidine 420. Zn(2+) is bound at residue aspartate 361. Histidine 420 provides a ligand contact to Zn(2+).

The protein belongs to the histidinol dehydrogenase family. It depends on Zn(2+) as a cofactor.

It catalyses the reaction L-histidinol + 2 NAD(+) + H2O = L-histidine + 2 NADH + 3 H(+). The protein operates within amino-acid biosynthesis; L-histidine biosynthesis; L-histidine from 5-phospho-alpha-D-ribose 1-diphosphate: step 9/9. Its function is as follows. Catalyzes the sequential NAD-dependent oxidations of L-histidinol to L-histidinaldehyde and then to L-histidine. The chain is Histidinol dehydrogenase from Neisseria gonorrhoeae (strain ATCC 700825 / FA 1090).